Reading from the N-terminus, the 606-residue chain is Maternal effect protein oskar (606 aa).

Residues 152 to 221 enclose the HTH OST-type domain; that stretch reads EYPDIDSEVR…SGKRIFNLKA (70 aa). Phosphoserine is present on residues Ser-270 and Ser-275. The leucine-zipper stretch occupies residues 425-439; that stretch reads LMGDDFMLYLARMEL.

As to quaternary structure, interacts with smaug (smg). In terms of assembly, interacts with yl/yolkless. In terms of tissue distribution, begins to accumulate at the posterior pole of the oocyte from stage 8 onwards.

It is found in the endosome. Its function is as follows. Organizes the germ plasm and directs localization of the posterior determinant nanos. Oskar protein is required to keep nanos (nos) RNA and staufen protein at the posterior pole. This Drosophila melanogaster (Fruit fly) protein is Maternal effect protein oskar (osk).